The primary structure comprises 202 residues: Nucleoid occlusion factor SlmA (202 aa).

The HTH tetR-type domain maps to lysine 14 to leucine 75. The segment at residues threonine 38 to phenylalanine 57 is a DNA-binding region (H-T-H motif).

The protein belongs to the nucleoid occlusion factor SlmA family. Homodimer. Interacts with FtsZ.

The protein resides in the cytoplasm. It localises to the nucleoid. Functionally, required for nucleoid occlusion (NO) phenomenon, which prevents Z-ring formation and cell division over the nucleoid. Acts as a DNA-associated cell division inhibitor that binds simultaneously chromosomal DNA and FtsZ, and disrupts the assembly of FtsZ polymers. SlmA-DNA-binding sequences (SBS) are dispersed on non-Ter regions of the chromosome, preventing FtsZ polymerization at these regions. This is Nucleoid occlusion factor SlmA from Actinobacillus pleuropneumoniae serotype 5b (strain L20).